The sequence spans 318 residues: Cyclic AMP receptor-like protein F (318 aa).

Residues 1–3 (MKD) lie on the Extracellular side of the membrane. Residues 4 to 24 (IILIYMICAPISMIGSLFIII) traverse the membrane as a helical segment. At 25 to 38 (TWLLYAKLKNSGSN) the chain is on the cytoplasmic side. Residues 39 to 59 (FIFFQAISDFFFTSKYIITII) traverse the membrane as a helical segment. The Extracellular portion of the chain corresponds to 60–83 (FYYINIPQFSDETSSTDTNPYCFS). C81 and C177 form a disulfide bridge. Residues 84 to 104 (LGLFSQFFGQATIMWSYTMTV) form a helical membrane-spanning segment. The Cytoplasmic segment spans residues 105–145 (KVFHSYFEMKKKNNNNNIGSNNIGGGGGGNNSNKQNSIDKT). A helical membrane pass occupies residues 146 to 166 (LKWYHLFVWGFCLVNATIIGI). At 167–187 (SKQYGPSSTGCWIVGANNPYR) the chain is on the extracellular side. A helical membrane pass occupies residues 188–208 (FFELVPLYFTITTSIIILILI). Residues 209-234 (LVKMKKSKPSSLLPTESMRYNQQARE) are Cytoplasmic-facing. A helical transmembrane segment spans residues 235 to 255 (FKIQLMKFVLIFIIFWLPATV). Over 256–267 (LRTLEYFGIEKT) the chain is Extracellular. The helical transmembrane segment at 268–288 (FFILLDAVSVSLQALANSLVW) threads the bilayer. The Cytoplasmic portion of the chain corresponds to 289-318 (ATSPQFLKLMKRKVVNKPNKQMEREYLINK).

Belongs to the G-protein coupled receptor 5 family.

It is found in the membrane. In terms of biological role, receptor for cAMP. The chain is Cyclic AMP receptor-like protein F (crlF) from Dictyostelium discoideum (Social amoeba).